Reading from the N-terminus, the 69-residue chain is Disintegrin EMF10A (69 aa).

A Disintegrin domain is found at 1–66 (MNSANPCCDP…DCPRNPWKSE (66 aa)). Intrachain disulfides connect C7/C30, C21/C27, C26/C51, and C39/C58. Residues 43–45 (RGD) carry the Cell attachment site motif.

Belongs to the disintegrin family. Dimeric disintegrin subfamily. As to quaternary structure, heterodimer with EMF10B; disulfide-linked. Expressed by the venom gland.

The protein localises to the secreted. Its function is as follows. Extremely potent and selective inhibitor of integrin alpha-5/beta-1 (ITGA5/ITGB1). Partially inhibits adhesion of cells expressing alpha-IIb/beta-3 (ITGA2B/ITGB3), alpha-V/beta-3 (ITGAV/ITGB3), and alpha-4/beta-1 (ITGA4/ITGB1) to appropriate ligands only at concentration higher than 500 nM. Weakly inhibits ADP-induced platelet aggregation. This is Disintegrin EMF10A from Eristicophis macmahoni (Leaf-nosed viper).